The following is a 521-amino-acid chain: MLQRSLGVNGRKLAMSARSAKRERKNASTAASKCYVVPPSARGWVHAYSVTATSMLNRRKAILDYLQGAVWVLPTFGVAIGLGSGAVLSMIPVKSGTLIDKLMFQGTPGDARGVLIVVSATMITTIGIVFSLTVLSLQIASSQFSVRLLRTFLRDVPNQVVLAIFACTFAYSTGGLHTVGEHRDGGAFIPKVAVTGSLALAFVSIAALIYFLHHLMHSIQIDTIMDKVRLRTLGLVDQLYPESDTADRQVETPPSPPADAVPLLAPHSGYLQTVDVDDIAEFAAASRYTALLVTFVGDYVTAGGLLGWCWRRGTAPGAPGSDFPQRCLRHVHIGFERTLQQDIRFGLRQMVDIALRALSPALNDPYTAIQVVHHLSAVESVLASRALPDDVRRDRAGELLFWLPYPSFATYLHVGCAQIRRYGSREPLVLTALLQLLSAVAQNCVDPSRRVAVQTQIALVVRAAQREFADESDRAMVLGAAARATEVVERPGTLAPPPSTFGQVAAAQAAASTIRSADRDG.

The tract at residues 1–25 (MLQRSLGVNGRKLAMSARSAKRERK) is disordered. 6 helical membrane passes run 68–88 (GAVWVLPTFGVAIGLGSGAVL), 114–134 (VLIVVSATMITTIGIVFSLTV), 160–180 (VVLAIFACTFAYSTGGLHTVG), 192–212 (VAVTGSLALAFVSIAALIYFL), 290–310 (ALLVTFVGDYVTAGGLLGWCW), and 399–419 (LLFWLPYPSFATYLHVGCAQI).

It localises to the cell membrane. This is an uncharacterized protein from Mycobacterium tuberculosis (strain CDC 1551 / Oshkosh).